The sequence spans 339 residues: Putative zinc metalloprotease FN1322 (339 aa).

His-17 contacts Zn(2+). Glu-18 is an active-site residue. His-21 is a Zn(2+) binding site. 3 helical membrane passes run 88–110 (FIVL…FVTA), 262–284 (FGWI…LNLL), and 318–335 (GMIL…NDVW). Residues 96 to 179 (FMNFLMAFIL…ITALVERNGK (84 aa)) form the PDZ domain.

This sequence belongs to the peptidase M50B family. Zn(2+) serves as cofactor.

The protein localises to the cell membrane. The chain is Putative zinc metalloprotease FN1322 from Fusobacterium nucleatum subsp. nucleatum (strain ATCC 25586 / DSM 15643 / BCRC 10681 / CIP 101130 / JCM 8532 / KCTC 2640 / LMG 13131 / VPI 4355).